The sequence spans 103 residues: Protamine-2 (103 aa).

Residues 1-103 (MVRYRTRSLS…RTRRRRCRRY (103 aa)) form a disordered region. Ser-8 and Ser-10 each carry phosphoserine. Residues 8 to 17 (SLSERPHEVH) are compositionally biased toward basic and acidic residues. Residues 18-29 (GQQVHGQDQGHN) are compositionally biased toward low complexity. Ser-37 is modified (phosphoserine). Over residues 39–48 (EHVEVYERTH) the composition is skewed to basic and acidic residues. Basic residues predominate over residues 49–103 (QGHSHHRRRRCSQRRLHRIHRRRHRSCRRRRRRSCRHRRRHRRGCRTRRRRCRRY).

The protein belongs to the protamine P2 family. Interacts with TDRP. Proteolytic processing into mature chains is required for histone eviction during spermatogenesis. Transition proteins (TNP1 and TNP2) are required for processing. As to expression, testis.

The protein resides in the nucleus. It localises to the chromosome. In terms of biological role, protamines substitute for histones in the chromatin of sperm during the haploid phase of spermatogenesis. They compact sperm DNA into a highly condensed, stable and inactive complex. This chain is Protamine-2 (PRM2), found in Erythrocebus patas (Red guenon).